The sequence spans 485 residues: Cysteine--tRNA ligase (485 aa).

Cys27 is a Zn(2+) binding site. The 'HIGH' region signature appears at 29-39 (ITAYDFSHIGH). Zn(2+) is bound by residues Cys208, His233, and Glu237. A 'KMSKS' region motif is present at residues 265–269 (KMSKS). Residue Lys268 coordinates ATP.

This sequence belongs to the class-I aminoacyl-tRNA synthetase family. As to quaternary structure, monomer. Zn(2+) is required as a cofactor.

The protein resides in the cytoplasm. The enzyme catalyses tRNA(Cys) + L-cysteine + ATP = L-cysteinyl-tRNA(Cys) + AMP + diphosphate. This is Cysteine--tRNA ligase from Lawsonia intracellularis (strain PHE/MN1-00).